The sequence spans 345 residues: Holliday junction branch migration complex subunit RuvB (345 aa).

A large ATPase domain (RuvB-L) region spans residues 4-185 (LDNRFVTPLS…FGVLCPMEFY (182 aa)). Residues Leu24, Arg25, Gly66, Lys69, Thr70, Thr71, 132 to 134 (EDY), Arg175, Tyr185, and Arg222 each bind ATP. Thr70 lines the Mg(2+) pocket. Residues 186–256 (NEEELKDIIV…MTNKALNLLE (71 aa)) are small ATPAse domain (RuvB-S). Residues 259–345 (KEGFDSIDTK…ENINQYKFKI (87 aa)) form a head domain (RuvB-H) region. DNA-binding residues include Arg314 and Arg319.

Belongs to the RuvB family. Homohexamer. Forms an RuvA(8)-RuvB(12)-Holliday junction (HJ) complex. HJ DNA is sandwiched between 2 RuvA tetramers; dsDNA enters through RuvA and exits via RuvB. An RuvB hexamer assembles on each DNA strand where it exits the tetramer. Each RuvB hexamer is contacted by two RuvA subunits (via domain III) on 2 adjacent RuvB subunits; this complex drives branch migration. In the full resolvosome a probable DNA-RuvA(4)-RuvB(12)-RuvC(2) complex forms which resolves the HJ.

Its subcellular location is the cytoplasm. It catalyses the reaction ATP + H2O = ADP + phosphate + H(+). The RuvA-RuvB-RuvC complex processes Holliday junction (HJ) DNA during genetic recombination and DNA repair, while the RuvA-RuvB complex plays an important role in the rescue of blocked DNA replication forks via replication fork reversal (RFR). RuvA specifically binds to HJ cruciform DNA, conferring on it an open structure. The RuvB hexamer acts as an ATP-dependent pump, pulling dsDNA into and through the RuvAB complex. RuvB forms 2 homohexamers on either side of HJ DNA bound by 1 or 2 RuvA tetramers; 4 subunits per hexamer contact DNA at a time. Coordinated motions by a converter formed by DNA-disengaged RuvB subunits stimulates ATP hydrolysis and nucleotide exchange. Immobilization of the converter enables RuvB to convert the ATP-contained energy into a lever motion, pulling 2 nucleotides of DNA out of the RuvA tetramer per ATP hydrolyzed, thus driving DNA branch migration. The RuvB motors rotate together with the DNA substrate, which together with the progressing nucleotide cycle form the mechanistic basis for DNA recombination by continuous HJ branch migration. Branch migration allows RuvC to scan DNA until it finds its consensus sequence, where it cleaves and resolves cruciform DNA. The chain is Holliday junction branch migration complex subunit RuvB from Clostridium tetani (strain Massachusetts / E88).